We begin with the raw amino-acid sequence, 206 residues long: Large ribosomal subunit protein uL4 (206 aa).

The disordered stretch occupies residues 49-76 (QSAKTRTEVRGGGIKPWRQKGTGRARQG).

The protein belongs to the universal ribosomal protein uL4 family. In terms of assembly, part of the 50S ribosomal subunit.

One of the primary rRNA binding proteins, this protein initially binds near the 5'-end of the 23S rRNA. It is important during the early stages of 50S assembly. It makes multiple contacts with different domains of the 23S rRNA in the assembled 50S subunit and ribosome. Its function is as follows. Forms part of the polypeptide exit tunnel. This Clostridium botulinum (strain Alaska E43 / Type E3) protein is Large ribosomal subunit protein uL4.